We begin with the raw amino-acid sequence, 182 residues long: Ribosome-recycling factor (182 aa).

This sequence belongs to the RRF family.

Its subcellular location is the cytoplasm. Functionally, responsible for the release of ribosomes from messenger RNA at the termination of protein biosynthesis. May increase the efficiency of translation by recycling ribosomes from one round of translation to another. In Prochlorococcus marinus (strain MIT 9515), this protein is Ribosome-recycling factor.